We begin with the raw amino-acid sequence, 254 residues long: Cytochrome c oxidase subunit 2 (254 aa).

The Mitochondrial intermembrane segment spans residues 12-38; sequence DAPEPWQICYQDSATKIMSGIDKLTGE. A helical transmembrane segment spans residues 39 to 59; the sequence is IFYYETLLLIIVGWVLISAII. Residues 60 to 73 are Mitochondrial matrix-facing; it reads KYTKTELSYKYFNH. Residues 74–94 form a helical membrane-spanning segment; that stretch reads GTLIEILWTCSPAFILIAISF. Topologically, residues 95–248 are mitochondrial intermembrane; the sequence is PSFKLLYLMD…KYLEWLNIHL (154 aa). Positions 182, 217, 219, 221, 225, and 228 each coordinate Cu cation. Residue E219 participates in Mg(2+) binding.

It belongs to the cytochrome c oxidase subunit 2 family. In terms of assembly, component of the cytochrome c oxidase (complex IV, CIV), a multisubunit enzyme composed of a catalytic core of 3 subunits and several supernumerary subunits. The complex exists as a monomer or a dimer and forms supercomplexes (SCs) in the inner mitochondrial membrane with ubiquinol-cytochrome c oxidoreductase (cytochrome b-c1 complex, complex III, CIII). It depends on Cu cation as a cofactor.

It localises to the mitochondrion inner membrane. It catalyses the reaction 4 Fe(II)-[cytochrome c] + O2 + 8 H(+)(in) = 4 Fe(III)-[cytochrome c] + 2 H2O + 4 H(+)(out). In terms of biological role, component of the cytochrome c oxidase, the last enzyme in the mitochondrial electron transport chain which drives oxidative phosphorylation. The respiratory chain contains 3 multisubunit complexes succinate dehydrogenase (complex II, CII), ubiquinol-cytochrome c oxidoreductase (cytochrome b-c1 complex, complex III, CIII) and cytochrome c oxidase (complex IV, CIV), that cooperate to transfer electrons derived from NADH and succinate to molecular oxygen, creating an electrochemical gradient over the inner membrane that drives transmembrane transport and the ATP synthase. Cytochrome c oxidase is the component of the respiratory chain that catalyzes the reduction of oxygen to water. Electrons originating from reduced cytochrome c in the intermembrane space (IMS) are transferred via the dinuclear copper A center (CU(A)) of subunit 2 and heme A of subunit 1 to the active site in subunit 1, a binuclear center (BNC) formed by heme A3 and copper B (CU(B)). The BNC reduces molecular oxygen to 2 water molecules using 4 electrons from cytochrome c in the IMS and 4 protons from the mitochondrial matrix. The chain is Cytochrome c oxidase subunit 2 from Zancudomyces culisetae (Gut fungus).